Here is a 134-residue protein sequence, read N- to C-terminus: MSDKTQRLEIVTPQRKVFSEDVSFLVAPGTEGELGVLPNHAPLITSLNIGIMRIQQEGKTFKVVVTGGFMEVRDNKVTVLANAAERAEEIDVARAEAARRRAEERLAKKTPDIDVLRAELALKRALTRLKAAGQ.

This sequence belongs to the ATPase epsilon chain family. F-type ATPases have 2 components, CF(1) - the catalytic core - and CF(0) - the membrane proton channel. CF(1) has five subunits: alpha(3), beta(3), gamma(1), delta(1), epsilon(1). CF(0) has three main subunits: a, b and c.

Its subcellular location is the cell membrane. Produces ATP from ADP in the presence of a proton gradient across the membrane. In Pelotomaculum thermopropionicum (strain DSM 13744 / JCM 10971 / SI), this protein is ATP synthase epsilon chain.